The following is a 413-amino-acid chain: Cardiolipin synthase B (413 aa).

2 consecutive PLD phosphodiesterase domains span residues I108–H135 and R285–S312. Catalysis depends on residues H113, K115, D120, H290, K292, and D297. The segment at A388–P413 is disordered.

This sequence belongs to the phospholipase D family. Cardiolipin synthase subfamily. ClsB sub-subfamily.

The protein resides in the cell membrane. The catalysed reaction is 2 a 1,2-diacyl-sn-glycero-3-phospho-(1'-sn-glycerol) = a cardiolipin + glycerol. In terms of biological role, catalyzes the phosphatidyl group transfer from one phosphatidylglycerol molecule to another to form cardiolipin (CL) (diphosphatidylglycerol) and glycerol. In Salmonella typhi, this protein is Cardiolipin synthase B.